Consider the following 573-residue polypeptide: Urease subunit alpha (573 aa).

Residues 136-573 (GAIDCHVHFI…LPMAQRYFLF (438 aa)) enclose the Urease domain. 3 residues coordinate Ni(2+): histidine 141, histidine 143, and lysine 224. Lysine 224 is modified (N6-carboxylysine). Histidine 226 is a binding site for substrate. Residues histidine 253 and histidine 279 each contribute to the Ni(2+) site. Histidine 327 functions as the Proton donor in the catalytic mechanism. Residue aspartate 367 coordinates Ni(2+).

It belongs to the metallo-dependent hydrolases superfamily. Urease alpha subunit family. Heterotrimer of UreA (gamma), UreB (beta) and UreC (alpha) subunits. Three heterotrimers associate to form the active enzyme. Ni cation serves as cofactor. In terms of processing, carboxylation allows a single lysine to coordinate two nickel ions.

The protein localises to the cytoplasm. The catalysed reaction is urea + 2 H2O + H(+) = hydrogencarbonate + 2 NH4(+). Its pathway is nitrogen metabolism; urea degradation; CO(2) and NH(3) from urea (urease route): step 1/1. This is Urease subunit alpha from Nocardia farcinica (strain IFM 10152).